Reading from the N-terminus, the 63-residue chain is Large ribosomal subunit protein bL28 (63 aa).

This sequence belongs to the bacterial ribosomal protein bL28 family.

The polypeptide is Large ribosomal subunit protein bL28 (Clostridium perfringens (strain ATCC 13124 / DSM 756 / JCM 1290 / NCIMB 6125 / NCTC 8237 / Type A)).